Consider the following 304-residue polypeptide: Cell surface-binding protein OPG105 (304 aa).

Residues 1 to 235 (MPQQLSPINI…NDDTQVYYSG (235 aa)) form the Alpha-carbonic anhydrase domain. The Virion surface segment spans residues 1-275 (MPQQLSPINI…YQKYIEGNKT (275 aa)). Residues 276 to 294 (FAIIAIVFVFILTAILFLM) form a helical membrane-spanning segment. Topologically, residues 295–304 (SRRYSREKQN) are intravirion.

It belongs to the alpha-carbonic anhydrase family. As to quaternary structure, homodimer; disulfide-linked. Post-translationally, apparently non-glycosylated.

It localises to the virion membrane. In terms of biological role, binds to chondroitin sulfate on the cell surface to provide virion attachment to target cell. The sequence is that of Cell surface-binding protein OPG105 (OPG105) from Rabbitpox virus (strain Utrecht) (RPV).